An 892-amino-acid polypeptide reads, in one-letter code: Isoleucine--tRNA ligase (892 aa).

The short motif at 60–70 (PYANGSIHIGH) is the 'HIGH' region element. Position 552 (Glu552) interacts with L-isoleucyl-5'-AMP. The 'KMSKS' region signature appears at 593–597 (KMSKS). Lys596 lines the ATP pocket. Zn(2+) contacts are provided by Cys862, Cys865, Cys879, and Cys882.

This sequence belongs to the class-I aminoacyl-tRNA synthetase family. IleS type 1 subfamily. Monomer. Requires Zn(2+) as cofactor.

The protein resides in the cytoplasm. The enzyme catalyses tRNA(Ile) + L-isoleucine + ATP = L-isoleucyl-tRNA(Ile) + AMP + diphosphate. Functionally, catalyzes the attachment of isoleucine to tRNA(Ile). As IleRS can inadvertently accommodate and process structurally similar amino acids such as valine, to avoid such errors it has two additional distinct tRNA(Ile)-dependent editing activities. One activity is designated as 'pretransfer' editing and involves the hydrolysis of activated Val-AMP. The other activity is designated 'posttransfer' editing and involves deacylation of mischarged Val-tRNA(Ile). This is Isoleucine--tRNA ligase from Mycoplasmopsis agalactiae (strain NCTC 10123 / CIP 59.7 / PG2) (Mycoplasma agalactiae).